The sequence spans 455 residues: 3-isopropylmalate dehydratase large subunit (455 aa).

Residues Cys336, Cys396, and Cys399 each coordinate [4Fe-4S] cluster.

The protein belongs to the aconitase/IPM isomerase family. LeuC type 1 subfamily. Heterodimer of LeuC and LeuD. [4Fe-4S] cluster is required as a cofactor.

The enzyme catalyses (2R,3S)-3-isopropylmalate = (2S)-2-isopropylmalate. It functions in the pathway amino-acid biosynthesis; L-leucine biosynthesis; L-leucine from 3-methyl-2-oxobutanoate: step 2/4. Functionally, catalyzes the isomerization between 2-isopropylmalate and 3-isopropylmalate, via the formation of 2-isopropylmaleate. The protein is 3-isopropylmalate dehydratase large subunit of Staphylococcus aureus (strain MRSA252).